Here is a 53-residue protein sequence, read N- to C-terminus: Sodium/potassium-transporting ATPase subunit gamma (53 aa).

The helical transmembrane segment at Gly-16 to Ser-34 threads the bilayer.

This sequence belongs to the FXYD family. In terms of assembly, regulatory subunit of the sodium/potassium-transporting ATPase which is composed of a catalytic alpha subunit, an auxiliary non-catalytic beta subunit and an additional regulatory subunit. Post-translationally, the N-terminus is blocked. As to expression, highest levels expressed in the kidney and spleen. Restricted to the basolateral membrane in renal epithelial cells and varies in its level of expression along the nephron.

It is found in the membrane. Functionally, may be involved in forming the receptor site for cardiac glycoside binding or may modulate the transport function of the sodium ATPase. This Ovis aries (Sheep) protein is Sodium/potassium-transporting ATPase subunit gamma (FXYD2).